We begin with the raw amino-acid sequence, 333 residues long: Elongation factor Ts, mitochondrial (333 aa).

The N-terminal 17 residues, 1–17 (MLRTLRPTLPSRCLRLY), are a transit peptide targeting the mitochondrion.

The protein belongs to the EF-Ts family.

The protein localises to the mitochondrion. Its function is as follows. Associates with the EF-Tu.GDP complex and induces the exchange of GDP to GTP. It remains bound to the aminoacyl-tRNA.EF-Tu.GTP complex up to the GTP hydrolysis stage on the ribosome. The chain is Elongation factor Ts, mitochondrial from Coprinopsis cinerea (strain Okayama-7 / 130 / ATCC MYA-4618 / FGSC 9003) (Inky cap fungus).